Here is a 375-residue protein sequence, read N- to C-terminus: MENFPTEYFLNTSVRLLEYIRYRDSNYTREERIENLHYAYNKAAHHFAQPRQQQMLKVDPKRLQASLQTIVGMVVYSWAKVSKECMADLSIHYTYTLVLDDSSDDPHPAMLNYFDDLQAGREQAHPWWALVNEHFPNVLRHFGPFCSLNLIRSTMDFFEGCWIEQYNFGGFPGSDDYPQFLRRMNGLGHCVGASLWPKELFDERKNFLEITTAVAQMENWMVWVNDLMSFYKEFDDERDQISLVKNFVTCHEITLDEALEKLTQETLHSSKQMVAVFADKDPQVMDTIECFMHGYVTWHLCDARYRLHEIYKKVKDQDTEDAKKFCKFFEQAANVGAVAPSEWAYPQVAQLANVRAKGDVKEAQKPILSSIELVE.

The protein belongs to the trichodiene synthase family.

The catalysed reaction is (2E,6E)-farnesyl diphosphate = trichodiene + diphosphate. The protein operates within sesquiterpene biosynthesis; trichothecene biosynthesis. Functionally, TS is a member of the terpene cyclase group of enzymes. It catalyzes the isomerization and cyclization of farnesyl pyro-phosphate to form trichodiene, the first cyclic intermediate in the biosynthetic pathway for trichothecenes. It serves to branch trichothecene biosynthesis from the isoprenoid pathway. The protein is Trichodiene synthase (TRI5) of Fusarium boothii.